A 504-amino-acid polypeptide reads, in one-letter code: Signal recognition particle receptor FtsY (504 aa).

Disordered stretches follow at residues 1-71 (MFNW…DDYL) and 116-135 (ESDQATATEADLPSPETEIT). GTP is bound by residues 308 to 315 (GVNGAGKT), 391 to 395 (DTAGR), and 455 to 458 (TKLD).

It belongs to the GTP-binding SRP family. FtsY subfamily. As to quaternary structure, part of the signal recognition particle protein translocation system, which is composed of SRP and FtsY.

Its subcellular location is the cell inner membrane. The protein localises to the cytoplasm. It catalyses the reaction GTP + H2O = GDP + phosphate + H(+). Its function is as follows. Involved in targeting and insertion of nascent membrane proteins into the cytoplasmic membrane. Acts as a receptor for the complex formed by the signal recognition particle (SRP) and the ribosome-nascent chain (RNC). The polypeptide is Signal recognition particle receptor FtsY (Synechocystis sp. (strain ATCC 27184 / PCC 6803 / Kazusa)).